Consider the following 75-residue polypeptide: MEEIPFENAMARLEEIVDLMNQPSTSLDSSLKLYEEADALMRICESRIRKAEDRVRELSEKRNETLLSEEESCTH.

The protein belongs to the XseB family. Heterooligomer composed of large and small subunits.

The protein localises to the cytoplasm. The catalysed reaction is Exonucleolytic cleavage in either 5'- to 3'- or 3'- to 5'-direction to yield nucleoside 5'-phosphates.. Bidirectionally degrades single-stranded DNA into large acid-insoluble oligonucleotides, which are then degraded further into small acid-soluble oligonucleotides. This chain is Exodeoxyribonuclease 7 small subunit, found in Chlamydia caviae (strain ATCC VR-813 / DSM 19441 / 03DC25 / GPIC) (Chlamydophila caviae).